The primary structure comprises 473 residues: Mitochondrial adenyl nucleotide antiporter SLC25A24-B (473 aa).

Residues 1–173 (MLEQVQKFLL…RYWKHSTVLD (173 aa)) form a regulatory N-terminal domain region. Topologically, residues 1-197 (MLEQVQKFLL…EKKTGQWWKQ (197 aa)) are mitochondrial intermembrane. 4 consecutive EF-hand domains span residues 19 to 54 (DSQS…MGME), 55 to 88 (VGKG…EEHE), 86 to 121 (EHEK…LGIK), and 122 to 157 (ISLD…NPAD). Asp32, Asn34, Asp36, Lys38, Glu43, Asp68, Asn70, Asp72, His74, Glu79, Asp99, Asn101, Asp103, Lys105, Glu110, Asp135, Asp137, Thr139, Thr141, and Glu146 together coordinate Ca(2+). Residues 159 to 168 (IQQIIRYWKH) form a linker region region. A C-terminal transmembrane transporter domain region spans residues 174–473 (IGDSLTIPDE…YEKMKVQLGI (300 aa)). Solcar repeat units follow at residues 192-277 (GQWW…YKKL), 285-370 (LGTA…LKNY), and 382-470 (PGVL…MKVQ). The helical transmembrane segment at 198–215 (LMAGGMAGAVSRTGTAPL) threads the bilayer. The Mitochondrial matrix portion of the chain corresponds to 216-251 (DRLKVMMQVHGSKGNSNIITGLKQMVKEGGIRSLWR). A helical transmembrane segment spans residues 252–271 (GNGVNVIKIAPETAMKFWAY). Topologically, residues 272 to 294 (EQYKKLFTSESGKLGTAERFVAG) are mitochondrial intermembrane. Residues 295-308 (SLAGATAQTSIYPM) traverse the membrane as a helical segment. Topologically, residues 309–344 (EVLKTRLAVGRTGQYSGMFDCAKKIMQKEGIRAFYK) are mitochondrial matrix. The chain crosses the membrane as a helical span at residues 345–364 (GYIPNILGIIPYAGIDLAIY). Topologically, residues 365–387 (ETLKNYWLQNHAKDSANPGVLVL) are mitochondrial intermembrane. Residues 388–405 (LGCGTASSTCGQLASYPL) form a helical membrane-spanning segment. The Mitochondrial matrix segment spans residues 406-444 (ALIRTRMQAQASIEGAPQLNMGGLFRKIVAKEGFLGLYR). Residues 445–464 (GIGPNFLKVLPAVSISYVVY) traverse the membrane as a helical segment. The Mitochondrial intermembrane segment spans residues 465–473 (EKMKVQLGI).

This sequence belongs to the mitochondrial carrier (TC 2.A.29) family. As to quaternary structure, monomer.

It is found in the mitochondrion inner membrane. It catalyses the reaction Mg(2+)(out) + phosphate(in) + ATP(out) = Mg(2+)(in) + phosphate(out) + ATP(in). It carries out the reaction ADP(out) + phosphate(in) + H(+)(out) = ADP(in) + phosphate(out) + H(+)(in). The catalysed reaction is AMP(out) + phosphate(in) = AMP(in) + phosphate(out). The enzyme catalyses phosphate(in) + ATP(out) + 2 H(+)(out) = phosphate(out) + ATP(in) + 2 H(+)(in). It catalyses the reaction dADP(in) + ADP(out) = dADP(out) + ADP(in). It carries out the reaction Mg(2+)(in) + ADP(out) + ATP(in) + H(+)(out) = Mg(2+)(out) + ADP(in) + ATP(out) + H(+)(in). The catalysed reaction is ADP(out) + diphosphate(in) = ADP(in) + diphosphate(out). The enzyme catalyses dAMP(in) + ADP(out) + H(+)(out) = dAMP(out) + ADP(in) + H(+)(in). It catalyses the reaction 3'-AMP(in) + ADP(out) + H(+)(out) = 3'-AMP(out) + ADP(in) + H(+)(in). It carries out the reaction dAMP(out) + phosphate(in) = dAMP(in) + phosphate(out). The catalysed reaction is 3'-AMP(out) + phosphate(in) = 3'-AMP(in) + phosphate(out). The enzyme catalyses dADP(out) + phosphate(in) + H(+)(out) = dADP(in) + phosphate(out) + H(+)(in). With respect to regulation, activated by an increase in cytosolic calcium levels that induce a conformational change of the N-terminal regulatory domain, uncapping the channel and allowing transport. Inhibited by bathophenanthroline, mersalyl, p-hydroxymercuribenzoate, bromcresol purple and tannic acid. Functionally, electroneutral antiporter that mediates the transport of adenyl nucleotides through the inner mitochondrial membrane. Originally identified as an ATP-magnesium/inorganic phosphate antiporter, it also acts as a broad specificity adenyl nucleotide antiporter. By regulating the mitochondrial matrix adenyl nucleotide pool could adapt to changing cellular energetic demands and indirectly regulate adenyl nucleotide-dependent metabolic pathways. The sequence is that of Mitochondrial adenyl nucleotide antiporter SLC25A24-B (slc25a24-b) from Xenopus laevis (African clawed frog).